Reading from the N-terminus, the 361-residue chain is MAASDLESKAKEAFVDDDFELAAELYTQAIDAGPATADLYADRAQAHIKLGNYTEAVADANKAIGLDPTMHKAYYRKGAACIKLEEYQTAKAALELGSSYAPGDSRFTRLLKECDECIAEESSQAPAKNVEAPVAATVEDKEDVANMDNTPPVVEPPSKPKYRHDYYNSATEVVLTIYAKGVPADSVVIDFGDQMLSVSIEVPGEEPYHFQPRLFSKIIPEKCKYQVLSTKVEIRLAKAEQVTWTTLDYSGRPKAIPQKISTPAETAPRPSYPSSKSKKDWDKLEAEVKKEEKEEKLEGDAALNKFFRDIYKDADEDMRRAMDKSFRESNGTVLSTNWKDVGSKTVEASPPDGMELKKWEI.

TPR repeat units follow at residues 3–36, 37–70, and 71–104; these read ASDL…GPAT, ADLY…DPTM, and HKAY…APGD. At T150 the chain carries Phosphothreonine. A CS domain is found at 159–248; that stretch reads KPKYRHDYYN…AEQVTWTTLD (90 aa). The interval 255–295 is disordered; the sequence is AIPQKISTPAETAPRPSYPSSKSKKDWDKLEAEVKKEEKEE. T262 is subject to Phosphothreonine. The region spanning 271 to 361 is the SGS domain; sequence SYPSSKSKKD…DGMELKKWEI (91 aa). Residues 277–295 show a composition bias toward basic and acidic residues; the sequence is SKKDWDKLEAEVKKEEKEE.

Belongs to the SGT1 family. Post-translationally, constitutively phosphorylated at Thr-262 and phosphorylated at Thr-150 upon infection with the fungal pathogen Ustilago maydis.

The protein resides in the cytoplasm. It is found in the nucleus. In terms of biological role, may act as positive regulator of basal defense. May be involved in basal disease resistance to the fungal pathogen Ustilago maydis. The polypeptide is Protein SGT1 homolog (Zea mays (Maize)).